We begin with the raw amino-acid sequence, 80 residues long: Small ribosomal subunit protein uS17 (80 aa).

It belongs to the universal ribosomal protein uS17 family. In terms of assembly, part of the 30S ribosomal subunit.

In terms of biological role, one of the primary rRNA binding proteins, it binds specifically to the 5'-end of 16S ribosomal RNA. The polypeptide is Small ribosomal subunit protein uS17 (Brucella suis (strain ATCC 23445 / NCTC 10510)).